Consider the following 335-residue polypeptide: Mesoderm-specific transcript protein (335 aa).

Helical transmembrane passes span 13-33 and 63-83; these read WWVQ…HIPP and VGVV…TSSY. The AB hydrolase-1 domain maps to 71 to 310; that stretch reads IVVLLHGFPT…PRSTVSILDD (240 aa). An RVIALD motif is present at residues 98-103; it reads RVIALD. N-linked (GlcNAc...) asparagine glycosylation is present at Asn163. A helical transmembrane segment spans residues 266–286; the sequence is VGALASVSIPIHFIYGPLDPI.

It belongs to the AB hydrolase superfamily. Expressed in mesodermal tissues. Isoform 1 is exclusively expressed from the paternal allele in all fetal tissues and cell lines examined, whereas isoform 2 is preferentially expressed from the paternal allele in a tissue-type-specific manner.

The protein localises to the endoplasmic reticulum membrane. The chain is Mesoderm-specific transcript protein (Mest) from Mus musculus (Mouse).